Reading from the N-terminus, the 635-residue chain is MKNNYSEANIKILKGLDAVKKRPGMYIGSTDSRGFHHLLWEILDNCVDEVLSGFANTIAVVLHAENQITVSDNGRGIPFETHSDSKISTIDTVFTYLHAGGKFDNDSYKIAGGLHGVGASVVNALSDQLQVTVKRQGKVYRSVYENGGKIKQKAHCIGNAKIDEHGTSVTFRPDPKVFKKIHFDSELIRARLKELAFLFKKLQLTFVDETGSGEKEVFFTEAGISQYLDELNADSKQIAQKIFVSGTEDDIELEAVFQFIDGEDEKLLSFANSIRTSEGGSHEASFRQSVGDVINNYCRKYNFLKERDKNFEASEIREGLNGIIKVNLPEKIIAFEGQTKSKLFSKEVKAVVQKLTQKHFFQFLERNSVDAKLIVEKLFYNRKLRQELKQQRQIKKNLSNPKAERILFGKLAPAQSKKVAERELFVVEGDSAGGTAKMGRDRFLQAILPLRGKVLNVEKINNKKEAINNEELLTLIFCIGTGIGNNFTIRDRKYDKIIIMTDADNDGAHIQILLLTFFYRYMKPLIEKGHIYLALPPLYKFEGRDKKARYLWTEQELEQYRAKHSHFNVQRYKGLGEMNADQLWETTMNPMTRKLIQVKLDNFIQAEKQINVFMGDKTELRKSWIEANINFSSEN.

Residues tyrosine 5, asparagine 45, aspartate 72, 113 to 119, and lysine 340 each bind ATP; that span reads GLHGVGA. The region spanning 422 to 537 is the Toprim domain; it reads RELFVVEGDS…KGHIYLALPP (116 aa). Mg(2+) contacts are provided by glutamate 428, aspartate 502, and aspartate 504.

It belongs to the type II topoisomerase family. ParE type 2 subfamily. As to quaternary structure, heterotetramer composed of ParC and ParE. The cofactor is Mg(2+). Requires Mn(2+) as cofactor. It depends on Ca(2+) as a cofactor.

It carries out the reaction ATP-dependent breakage, passage and rejoining of double-stranded DNA.. Its function is as follows. Topoisomerase IV is essential for chromosome segregation. It relaxes supercoiled DNA. Performs the decatenation events required during the replication of a circular DNA molecule. This Mycoplasma pneumoniae (strain ATCC 29342 / M129 / Subtype 1) (Mycoplasmoides pneumoniae) protein is DNA topoisomerase 4 subunit B.